A 510-amino-acid chain; its full sequence is MIWHVQNENFILDSTRIFMKAFHLLLFDGSLIVPECILIFGLILLLMIDSTSDQKDIPWLYFISSTSLVMSITALLFRWREEPVISFSGNFQTNNFNEIFQFLILLCSTLCIPLSVEYIECTEMAITEFLLFVLTATLGGMFLCGANDLITIFVAPECFSLCSYLLSGYTKKDVRSNEATMKYLLMGGASSSILVHGFSWLYGSSGGEIELQEIVNGLINTQMYNSPGISIALIFITVGIGFKLSPAPSHQWTPDVYEGSPTPVVAFLSVTSKVAASASATRIFDIPFYFSSNEWHLLLETLAILSMILGNLIAITQTSMKRMLAYSSIGQIGYVIIGIIVGDSNDGYASMITYMLFYISMNLGTFACIVLFGLRTGTDNIRDYAGLYTKDPFLALSLALCLLSLGGLPPLAGFFGKLYLFWCGWQAGLYFLVLIGLLTSVVSIYYYLKIIKLLMTGRTQEITPHVRNYRRSPFRSNNSIELSMIVCVIASTIPGISMNPIIAIAQDTLF.

Helical transmembrane passes span 24–44 (LLLF…GLIL), 57–77 (IPWL…ALLF), 99–119 (IFQF…VEYI), 124–144 (MAIT…MFLC), 149–169 (LITI…LSGY), 183–203 (YLLM…WLYG), 227–247 (PGIS…LSPA), 295–315 (WHLL…LIAI), 323–343 (MLAY…IVGD), 354–374 (YMLF…LFGL), 395–415 (ALSL…AGFF), 418–438 (LYLF…IGLL), and 484–504 (MIVC…IIAI).

This sequence belongs to the complex I subunit 2 family. NDH is composed of at least 16 different subunits, 5 of which are encoded in the nucleus.

It is found in the plastid. The protein localises to the chloroplast thylakoid membrane. It catalyses the reaction a plastoquinone + NADH + (n+1) H(+)(in) = a plastoquinol + NAD(+) + n H(+)(out). The enzyme catalyses a plastoquinone + NADPH + (n+1) H(+)(in) = a plastoquinol + NADP(+) + n H(+)(out). Functionally, NDH shuttles electrons from NAD(P)H:plastoquinone, via FMN and iron-sulfur (Fe-S) centers, to quinones in the photosynthetic chain and possibly in a chloroplast respiratory chain. The immediate electron acceptor for the enzyme in this species is believed to be plastoquinone. Couples the redox reaction to proton translocation, and thus conserves the redox energy in a proton gradient. This chain is NAD(P)H-quinone oxidoreductase subunit 2 B, chloroplastic, found in Daucus carota (Wild carrot).